Reading from the N-terminus, the 271-residue chain is Type III pantothenate kinase (271 aa).

5 to 12 (DISNSVTK) provides a ligand contact to ATP. Substrate contacts are provided by residues tyrosine 85 and 92-95 (GADR). Catalysis depends on aspartate 94, which acts as the Proton acceptor. K(+) is bound at residue aspartate 114. Residue threonine 117 coordinates ATP. Threonine 169 contributes to the substrate binding site.

Belongs to the type III pantothenate kinase family. As to quaternary structure, homodimer. Requires NH4(+) as cofactor. K(+) is required as a cofactor.

Its subcellular location is the cytoplasm. The enzyme catalyses (R)-pantothenate + ATP = (R)-4'-phosphopantothenate + ADP + H(+). Its pathway is cofactor biosynthesis; coenzyme A biosynthesis; CoA from (R)-pantothenate: step 1/5. Its function is as follows. Catalyzes the phosphorylation of pantothenate (Pan), the first step in CoA biosynthesis. This Methylacidiphilum infernorum (isolate V4) (Methylokorus infernorum (strain V4)) protein is Type III pantothenate kinase.